Here is a 93-residue protein sequence, read N- to C-terminus: MFCSIYKSTKKQGAYLYIEKKDDFAPVPQELMSMFGTPTMVMVVNLEGRKLASVDVEKVKTAIKENGFFLQLPPPPENLLEKYKKDKAAREEN.

One can recognise a YcgL domain in the interval 1-84; that stretch reads MFCSIYKSTK…PPENLLEKYK (84 aa).

The chain is YcgL domain-containing protein VFMJ11_1829 from Aliivibrio fischeri (strain MJ11) (Vibrio fischeri).